The primary structure comprises 535 residues: Lecithin-cholesterol acyltransferase-like 4 (535 aa).

Ser-2 carries the N-acetylserine modification. Ser-182 (acyl-ester intermediate) is an active-site residue. Residues Asp-391 and His-416 each act as charge relay system in the active site. Residues Ser-488–Gln-505 are compositionally biased toward polar residues. The tract at residues Ser-488–Glu-507 is disordered.

The protein belongs to the AB hydrolase superfamily. Lipase family.

This Arabidopsis thaliana (Mouse-ear cress) protein is Lecithin-cholesterol acyltransferase-like 4 (LCAT4).